A 230-amino-acid polypeptide reads, in one-letter code: UPF0688 protein C1orf174 homolog (230 aa).

Disordered stretches follow at residues 1-85 (MRSR…SLPK) and 97-166 (AEDS…VRAS). Low complexity predominate over residues 11–30 (RSSARLRARSYSSASLASAR). The span at 31–48 (DVTSSTSAKTTCLASSSH) shows a compositional bias: polar residues. Over residues 49–78 (KATDRRTSKKFKYDKGHLVKAELQKLDPKS) the composition is skewed to basic and acidic residues. Ser180 bears the Phosphoserine mark.

Belongs to the UPF0688 family.

The protein resides in the nucleus. This chain is UPF0688 protein C1orf174 homolog, found in Mus musculus (Mouse).